The sequence spans 263 residues: MGKVILITGASRGIGLQLVKTVIEEDDECIVYGVARTEAGLQSLQREYGADKFVYRVLDITDRSRMEALVEEIRQKHGKLDGIVANAGMLEPVKSISQSNSEHDIKQWERLFDVNFFSIVSLVALCLPLLKSSPFVGNIVFVSSGASVKPYNGWSAYGCSKAALNHFAMDIASEEPSDKVRAVCIAPGVVDTQMQKDIRETLGPQGMTPKALERFTQLYKTSSLLDPKVPAAVLAQLVLKGIPDSLNGQYLRYNDERLGPVQG.

NADP(+)-binding residues include Ile7 and Asn86. Ser143 functions as the Proton donor in the catalytic mechanism. Tyr157, Lys161, Val190, and Thr192 together coordinate NADP(+). Catalysis depends on Tyr157, which acts as the Proton acceptor. The active-site Lowers pKa of active site Tyr is the Lys161.

Belongs to the short-chain dehydrogenases/reductases (SDR) family.

It catalyses the reaction (S)-benzoin + NADP(+) = benzil + NADPH + H(+). The catalysed reaction is 2-hydroxy-1-phenyl-1-propanone + NADP(+) = 1-phenyl-1,2-propanedione + NADPH + H(+). Its function is as follows. Reduces benzil stereospecifically to (S)-benzoin. Also reduces 1-phenyl-1,2-propanedione to 2-hydroxy-1-phenyl-1-propanone. Is probably involved in a pathway contributing to genomic integrity. The chain is Benzil reductase ((S)-benzoin forming) IRC24 (IRC24) from Saccharomyces cerevisiae (strain ATCC 204508 / S288c) (Baker's yeast).